A 535-amino-acid chain; its full sequence is Bifunctional purine biosynthesis protein PurH (535 aa).

The MGS-like domain maps to 6–151 (TRLPIRRALI…KNHKDVAIVV (146 aa)).

It belongs to the PurH family.

It catalyses the reaction (6R)-10-formyltetrahydrofolate + 5-amino-1-(5-phospho-beta-D-ribosyl)imidazole-4-carboxamide = 5-formamido-1-(5-phospho-D-ribosyl)imidazole-4-carboxamide + (6S)-5,6,7,8-tetrahydrofolate. It carries out the reaction IMP + H2O = 5-formamido-1-(5-phospho-D-ribosyl)imidazole-4-carboxamide. It participates in purine metabolism; IMP biosynthesis via de novo pathway; 5-formamido-1-(5-phospho-D-ribosyl)imidazole-4-carboxamide from 5-amino-1-(5-phospho-D-ribosyl)imidazole-4-carboxamide (10-formyl THF route): step 1/1. Its pathway is purine metabolism; IMP biosynthesis via de novo pathway; IMP from 5-formamido-1-(5-phospho-D-ribosyl)imidazole-4-carboxamide: step 1/1. This is Bifunctional purine biosynthesis protein PurH from Pseudomonas fluorescens (strain ATCC BAA-477 / NRRL B-23932 / Pf-5).